The following is a 228-amino-acid chain: MTKIDLLARVFVIATIIALATAVDYYKLKCPPKTKHTMCIYGTNSHPSRNCGVVKGSGPTDQEKREILKEHNDYGHKVASGEEKRGVNGGQPAAKNMEDMTWDDELAKVAQTWANQCTINHDKCRSVSRFSVGQNLASKSTTGNDFPPVVELIQLWENEVSDFDKNNIKSLPASGISKTGHYTQMVWAKSNKLGCGSIKHHKDGWNKHFLVCNYGPSGNYLGQSVYEV.

The signal sequence occupies residues 1–22 (MTKIDLLARVFVIATIIALATA). 3 disulfide bridges follow: C30–C124, C51–C117, and C195–C212. The SCP domain occupies 69-214 (KEHNDYGHKV…WNKHFLVCNY (146 aa)).

Belongs to the CRISP family. Venom allergen 5-like subfamily. In terms of tissue distribution, expressed by the venom gland.

Its subcellular location is the secreted. This is Venom allergen 5 from Rhynchium brunneum (Potter wasp).